The sequence spans 142 residues: Large ribosomal subunit protein uL13 (142 aa).

This sequence belongs to the universal ribosomal protein uL13 family. As to quaternary structure, part of the 50S ribosomal subunit.

Its function is as follows. This protein is one of the early assembly proteins of the 50S ribosomal subunit, although it is not seen to bind rRNA by itself. It is important during the early stages of 50S assembly. In Coxiella burnetii (strain CbuK_Q154) (Coxiella burnetii (strain Q154)), this protein is Large ribosomal subunit protein uL13.